Consider the following 1515-residue polypeptide: Metal resistance protein YCF1 (1515 aa).

Residues 1 to 32 are Vacuolar-facing; it reads MAGNLVSWACKLCRSPEGFGPISFYGDFTQCF. Residues 33–53 form a helical membrane-spanning segment; it reads IDGVILNLSAIFMITFGIRDL. Residues 54–73 are Cytoplasmic-facing; sequence VNLCKKKHSGIKYRRNWIIV. Residues 74–94 form a helical membrane-spanning segment; that stretch reads SRMALVLLEIAFVSLASLNIS. Residues 95–99 lie on the Vacuolar side of the membrane; the sequence is KEEAE. The chain crosses the membrane as a helical span at residues 100–120; the sequence is NFTIVSQYASTMLSLFVALAL. Residues 121-130 are Cytoplasmic-facing; that stretch reads HWIEYDRSVV. A helical transmembrane segment spans residues 131-151; it reads ANTVLLFYWLFETFGNFAKLI. Over 152 to 169 the chain is Vacuolar; sequence NILIRHTYEGIWYSGQTG. A helical membrane pass occupies residues 170-190; it reads FILTLFQVITCASILLLEALP. Over 191–278 the chain is Cytoplasmic; it reads KKPLMPHQHI…QKSNPSLSWA (88 aa). Residue Ser251 is modified to Phosphoserine. Residues 279–299 form a helical membrane-spanning segment; that stretch reads ICRTFGSKMLLAAFFKAIHDV. Positions 287–590 constitute an ABC transmembrane type-1 1 domain; sequence MLLAAFFKAI…IPMVLNSFIE (304 aa). The Vacuolar portion of the chain corresponds to 300-345; it reads LAFTQPQLLRILIKFVTDYNSERQDDHSSLQGFENNHPQKLPIVRG. The helical transmembrane segment at 346 to 366 threads the bilayer; it reads FLIAFAMFLVGFTQTSVLHQY. Topologically, residues 367-422 are cytoplasmic; sequence FLNVFNTGMYIKSALTALIYQKSLVLSNEASGLSSTGDIVNLMSVDVQKLQDLTQW. A helical membrane pass occupies residues 423-443; sequence LNLIWSGPFQIIICLYSLYKL. Over 444 to 446 the chain is Vacuolar; that stretch reads LGN. A helical membrane pass occupies residues 447–467; the sequence is SMWVGVIILVIMMPLNSFLMR. Topologically, residues 468–530 are cytoplasmic; the sequence is IQKKLQKSQM…NLTKLGCYMA (63 aa). A helical transmembrane segment spans residues 531–551; that stretch reads VTSFQFNIVPFLVSCCTFAVF. The Vacuolar portion of the chain corresponds to 552–572; it reads VYTEDRALTTDLVFPALTLFN. The chain crosses the membrane as a helical span at residues 573 to 593; it reads LLSFPLMIIPMVLNSFIEASV. At 594-943 the chain is on the cytoplasmic side; it reads SIGRLFTFFT…VKWNIYLEYA (350 aa). One can recognise an ABC transporter 1 domain in the interval 626 to 853; it reads INIGDDATFL…ADSPLWKLLN (228 aa). An ATP-binding site is contributed by 663 to 670; sequence GKVGSGKT. Residues Ser873, Ser903, and Ser908 each carry the phosphoserine modification. Thr911 carries the phosphothreonine modification. A Phosphoserine modification is found at Ser914. A helical membrane pass occupies residues 944–964; sequence KACNPKSVCVFILFIVISMFL. An ABC transmembrane type-1 2 domain is found at 951 to 1235; the sequence is VCVFILFIVI…IVRMTVEVET (285 aa). The Vacuolar portion of the chain corresponds to 965 to 1001; the sequence is SVMGNVWLKHWSEVNSRYGSNPNAARYLAIYFALGIG. Residues 1002–1023 form a helical membrane-spanning segment; that stretch reads SALATLIQTIVLWVFCTIHASK. Topologically, residues 1024–1066 are cytoplasmic; it reads YLHNLMTNSVLRAPMTFFETTPIGRILNRFSNDIYKVDALLGR. Residues 1067–1087 traverse the membrane as a helical segment; that stretch reads TFSQFFVNAVKVTFTITVICA. Residue Thr1088 is a topological domain, vacuolar. Residues 1089–1109 form a helical membrane-spanning segment; the sequence is TWQFIFIIIPLSVFYIYYQQY. Residues 1110-1180 are Cytoplasmic-facing; the sequence is YLRTSRELRR…NANRWLAYRL (71 aa). The helical transmembrane segment at 1181 to 1201 threads the bilayer; the sequence is ELIGSIIILGAATLSVFRLKQ. The Vacuolar segment spans residues 1202 to 1205; the sequence is GTLT. Residues 1206 to 1226 traverse the membrane as a helical segment; that stretch reads AGMVGLSLSYALQITQTLNWI. The Cytoplasmic segment spans residues 1227 to 1515; the sequence is VRMTVEVETN…CMEAGLVNEN (289 aa). Residues 1272 to 1507 form the ABC transporter 2 domain; that stretch reads IKFNNYSTRY…NKSLFYSLCM (236 aa). 1306–1313 lines the ATP pocket; the sequence is GRTGAGKS.

This sequence belongs to the ABC transporter superfamily. ABCC family. Conjugate transporter (TC 3.A.1.208) subfamily.

Its subcellular location is the vacuole membrane. The enzyme catalyses Cd(2+)(in) + ATP + H2O = Cd(2+)(out) + ADP + phosphate + H(+). The catalysed reaction is an S-substituted glutathione(in) + ATP + H2O = an S-substituted glutathione(out) + ADP + phosphate + H(+). Functionally, cooperates for the ATP-dependent vacuolar transport of bilirubin and glutathione conjugates. This chain is Metal resistance protein YCF1 (YCF1), found in Saccharomyces cerevisiae (strain ATCC 204508 / S288c) (Baker's yeast).